The sequence spans 576 residues: Gamma-aminobutyric acid receptor subunit beta (576 aa).

Residues 1–29 (MSDSMLYQTLQTCLPKSRLITLWLAFTLA) form the signal peptide. Topologically, residues 30–268 (MLIQEPRRHA…IQFVRSMGYY (239 aa)) are extracellular. Asparagine 56 carries N-linked (GlcNAc...) asparagine glycosylation. Cysteine 183 and cysteine 197 form a disulfide bridge. A glycan (N-linked (GlcNAc...) asparagine) is linked at asparagine 251. 3 helical membrane passes run 269 to 289 (LIQI…SFWL), 298 to 320 (VALG…AALP), and 330 to 350 (VYLG…ATVG). Residues 351–540 (YMAKRIQMRK…TPSDIDKYSR (190 aa)) lie on the Cytoplasmic side of the membrane. Disordered stretches follow at residues 372-418 (QKKQ…QTVS) and 452-507 (HDPK…GDAE). The span at 398-412 (HGHGHGHHSHGHPHV) shows a compositional bias: basic residues. Pro residues predominate over residues 475-490 (PVGPHGPGPQGPPGGP). Residues 491 to 501 (PAGGGGGGAPP) are compositionally biased toward gly residues. The chain crosses the membrane as a helical span at residues 541 to 561 (IVFPVCFVCFNLMYWIIYLHV).

It belongs to the ligand-gated ion channel (TC 1.A.9) family. Gamma-aminobutyric acid receptor (TC 1.A.9.5) subfamily. In terms of assembly, homomultimer.

It localises to the postsynaptic cell membrane. The protein localises to the cell membrane. Functionally, GABA, an inhibitory neurotransmitter, mediates neuronal inhibition by binding to the GABA receptor and opening an integral chloride channel. The polypeptide is Gamma-aminobutyric acid receptor subunit beta (Musca domestica (House fly)).